A 556-amino-acid chain; its full sequence is ATP synthase subunit alpha 2 (556 aa).

177–184 (GDRATGKT) contacts ATP. The interval 514–556 (GGHAEDAADDMGGALDGEHASGDATSIAPTPPGGAEAGAPRKR) is disordered. The span at 546–556 (GGAEAGAPRKR) shows a compositional bias: low complexity.

The protein belongs to the ATPase alpha/beta chains family. F-type ATPases have 2 components, CF(1) - the catalytic core - and CF(0) - the membrane proton channel. CF(1) has five subunits: alpha(3), beta(3), gamma(1), delta(1), epsilon(1). CF(0) has three main subunits: a(1), b(2) and c(9-12). The alpha and beta chains form an alternating ring which encloses part of the gamma chain. CF(1) is attached to CF(0) by a central stalk formed by the gamma and epsilon chains, while a peripheral stalk is formed by the delta and b chains.

The protein resides in the cell inner membrane. The enzyme catalyses ATP + H2O + 4 H(+)(in) = ADP + phosphate + 5 H(+)(out). In terms of biological role, produces ATP from ADP in the presence of a proton gradient across the membrane. The alpha chain is a regulatory subunit. The protein is ATP synthase subunit alpha 2 of Burkholderia thailandensis (strain ATCC 700388 / DSM 13276 / CCUG 48851 / CIP 106301 / E264).